Here is a 183-residue protein sequence, read N- to C-terminus: Ferredoxin-2, mitochondrial (183 aa).

A mitochondrion-targeting transit peptide spans 1-52; sequence MAASVAWGGVNAGFLLRAARGAWWSRPGGFWGSGEAAAPAIARKFRATGSRP. The region spanning 68–170 is the 2Fe-2S ferredoxin-type domain; it reads VNVVFVDRSG…GAEFTLPKIT (103 aa). [2Fe-2S] cluster contacts are provided by cysteine 105, cysteine 111, cysteine 114, and cysteine 151.

This sequence belongs to the adrenodoxin/putidaredoxin family. As to quaternary structure, component of the mitochondrial core iron-sulfur cluster (ISC) complex composed of NFS1, LYRM4, NDUFAB1, ISCU, FXN, and FDX2; this complex is a heterohexamer containing two copies of each monomer. Form a heterodimer complex with NFS1. Interacts (in both their reduced and oxidized states) with the cysteine desulfurase (NFS1:LYRM4) complex; this interaction stimulates cysteine desulfurase activity, and serves as a reductant for Fe-S cluster assembly. [2Fe-2S] cluster serves as cofactor.

It localises to the mitochondrion. The protein resides in the mitochondrion matrix. In terms of biological role, electron donor, of the core iron-sulfur cluster (ISC) assembly complex, that acts to reduce the persulfide into sulfide during [2Fe-2S] clusters assembly on the scaffolding protein ISCU. The core iron-sulfur cluster (ISC) assembly complex is involved in the de novo synthesis of a [2Fe-2S] cluster, the first step of the mitochondrial iron-sulfur protein biogenesis. This process is initiated by the cysteine desulfurase complex (NFS1:LYRM4:NDUFAB1) that produces persulfide which is delivered on the scaffold protein ISCU in a FXN-dependent manner. Then this complex is stabilized by FDX2 which provides reducing equivalents to accomplish the [2Fe-2S] cluster assembly. Finally, the [2Fe-2S] cluster is transferred from ISCU to chaperone proteins, including HSCB, HSPA9 and GLRX5. Essential for coenzyme Q biosynthesis: together with FDXR, transfers the electrons required for the hydroxylation reaction performed by COQ6. The polypeptide is Ferredoxin-2, mitochondrial (Bos taurus (Bovine)).